The chain runs to 505 residues: Glycerol kinase (505 aa).

Residue Thr-14 coordinates ADP. Thr-14, Thr-15, and Ser-16 together coordinate ATP. Thr-14 lines the sn-glycerol 3-phosphate pocket. Arg-18 provides a ligand contact to ADP. Sn-glycerol 3-phosphate contacts are provided by Arg-84, Glu-85, Tyr-136, and Asp-246. Glycerol contacts are provided by Arg-84, Glu-85, Tyr-136, Asp-246, and Gln-247. ADP-binding residues include Thr-268 and Gly-311. 4 residues coordinate ATP: Thr-268, Gly-311, Gln-315, and Gly-412. Positions 412 and 416 each coordinate ADP.

It belongs to the FGGY kinase family.

The enzyme catalyses glycerol + ATP = sn-glycerol 3-phosphate + ADP + H(+). It functions in the pathway polyol metabolism; glycerol degradation via glycerol kinase pathway; sn-glycerol 3-phosphate from glycerol: step 1/1. Its activity is regulated as follows. Inhibited by fructose 1,6-bisphosphate (FBP). Key enzyme in the regulation of glycerol uptake and metabolism. Catalyzes the phosphorylation of glycerol to yield sn-glycerol 3-phosphate. The chain is Glycerol kinase from Vibrio campbellii (strain ATCC BAA-1116).